The sequence spans 259 residues: Small ribosomal subunit protein uS2 (259 aa).

It belongs to the universal ribosomal protein uS2 family.

The chain is Small ribosomal subunit protein uS2 from Streptococcus pneumoniae serotype 2 (strain D39 / NCTC 7466).